The primary structure comprises 59 residues: Large ribosomal subunit protein bL32 (59 aa).

The segment covering 1–16 (MAVPKRKTSPSKRGMR) has biased composition (basic residues). The segment at 1–20 (MAVPKRKTSPSKRGMRRSHD) is disordered.

This sequence belongs to the bacterial ribosomal protein bL32 family.

The chain is Large ribosomal subunit protein bL32 from Sphingopyxis alaskensis (strain DSM 13593 / LMG 18877 / RB2256) (Sphingomonas alaskensis).